The primary structure comprises 271 residues: Ferric vulnibactin reductase VuuB (271 aa).

An FAD-binding FR-type domain is found at 8 to 131 (VYPMLLDFVR…IGPAGPDPLI (124 aa)).

This sequence belongs to the SIP oxidoreductase family. In terms of assembly, monomer. FAD serves as cofactor.

The protein resides in the cytoplasm. The enzyme catalyses 2 a Fe(II)-siderophore + NAD(+) + H(+) = 2 a Fe(III)-siderophore + NADH. Its function is as follows. Ferric-siderophore reductase involved in iron removal from the siderophores after their transport into the cell. Acts as a major ferric-vulnibactin reductase catalyzing the reduction of Fe(3+)-vulnibactin, a catecholate siderophore synthesized by V.vulnificus. Catalyzes reduction of Fe(3+)-aerobactin, a citrate-hydroxamate siderophore produced by other bacteria, in the absence of IutB. Catalyzes reduction of Fe(3+)-vibriobactin in vitro. No activity with ferrioxamine B or Fe(3+)-enterobactin. Catalyzes reduction of ferric chelating compounds Fe(3+)-nitrilotriacetic acid (NTA), Fe(3+)-citrate and Fe(3+)-EDTA as well as non-complexed FeCl3 in the presence of NADH as its electron donor and FAD as its cofactor in vitro. Highest activity with Fe(3+)-NTA as electron acceptor. The protein is Ferric vulnibactin reductase VuuB of Vibrio vulnificus.